Here is a 174-residue protein sequence, read N- to C-terminus: uncharacterized protein (174 aa).

The segment at 138-174 is disordered; it reads VNLTSKSSGRSDEEGTTRRAPVLKTRADFVSRKDKHR. The span at 162-174 shows a compositional bias: basic and acidic residues; the sequence is TRADFVSRKDKHR.

This is an uncharacterized protein from Bos taurus (Bovine).